Here is a 432-residue protein sequence, read N- to C-terminus: Benzoyl-CoA reductase subunit B (432 aa).

The protein belongs to the FldB/FldC dehydratase alpha/beta subunit family. Heterotetramer composed of A, B, C, and D subunits. Requires iron-sulfur cluster as cofactor. An oxidized flavin is required as a cofactor.

It catalyses the reaction cyclohexa-1,5-diene-1-carbonyl-CoA + oxidized 2[4Fe-4S]-[ferredoxin] + 2 ADP + 2 phosphate = reduced 2[4Fe-4S]-[ferredoxin] + benzoyl-CoA + 2 ATP + 2 H2O. The catalysed reaction is 3-hydroxybenzoyl-CoA + AH2 + 2 ATP + 2 H2O = 3-hydroxycyclohexa-1,5-diene-1-carbonyl-CoA + A + 2 ADP + 2 phosphate + 2 H(+). In terms of biological role, catalyzes the anaerobic reduction of benzoyl-CoA and 3-hydroxybenzoyl-CoA to form cyclohexa-1,5-diene-1-carbonyl-CoA and 3-hydroxycyclohexa-1,5-diene-1-carbonyl-CoA, respectively. The enzyme also reduces other benzoyl-CoA analogs with small substituents at the aromatic ring. This is Benzoyl-CoA reductase subunit B (bcrB) from Thauera aromatica.